The chain runs to 156 residues: RNA pyrophosphohydrolase (156 aa).

In terms of domain architecture, Nudix hydrolase spans 6-148 (NYRPNVAAIV…KKNIYVKVIK (143 aa)). Positions 43–64 (GGIDKGESAKNALFRELKEEIG) match the Nudix box motif.

The protein belongs to the Nudix hydrolase family. RppH subfamily. The cofactor is a divalent metal cation.

Functionally, accelerates the degradation of transcripts by removing pyrophosphate from the 5'-end of triphosphorylated RNA, leading to a more labile monophosphorylated state that can stimulate subsequent ribonuclease cleavage. In Campylobacter jejuni subsp. doylei (strain ATCC BAA-1458 / RM4099 / 269.97), this protein is RNA pyrophosphohydrolase.